The chain runs to 416 residues: D-amino acid dehydrogenase (416 aa).

3 to 17 serves as a coordination point for FAD; it reads VIVLGAGIIGVTSAY.

The protein belongs to the DadA oxidoreductase family. The cofactor is FAD.

The catalysed reaction is a D-alpha-amino acid + A + H2O = a 2-oxocarboxylate + AH2 + NH4(+). It functions in the pathway amino-acid degradation; D-alanine degradation; NH(3) and pyruvate from D-alanine: step 1/1. Its function is as follows. Oxidative deamination of D-amino acids. This Sinorhizobium medicae (strain WSM419) (Ensifer medicae) protein is D-amino acid dehydrogenase.